A 309-amino-acid polypeptide reads, in one-letter code: Olfactory receptor 6C4 (309 aa).

At 1 to 23 (MKNRTMFGEFILLGLTNQPELQV) the chain is on the extracellular side. N3 carries N-linked (GlcNAc...) asparagine glycosylation. Residues 24–44 (MIFIFLFLTYMLSILGNLTII) form a helical membrane-spanning segment. Topologically, residues 45-52 (TLTLLDPH) are cytoplasmic. A helical transmembrane segment spans residues 53 to 73 (LQTPMYFFLRNFSFLEISFTS). Over 74–97 (IFIPRFLTSMTTGNKVISFAGCLT) the chain is Extracellular. C95 and C187 are disulfide-bonded. The helical transmembrane segment at 98–118 (QYFFAIFLGATEFYLLASMSY) threads the bilayer. Residues 119–137 (DRYVAICKPLHYLTIMSSR) lie on the Cytoplasmic side of the membrane. The chain crosses the membrane as a helical span at residues 138 to 158 (VCIQLVFCSWLGGFLAILPPI). The Extracellular segment spans residues 159–195 (ILMTQVDFCVSNILNHYYCDYGPLVELACSDTSLLEL). The helical transmembrane segment at 196–215 (MVILLAVVTLMVTLVLVTLS) threads the bilayer. Residues 216–235 (YTYIIRTILRIPSAQQRTKA) are Cytoplasmic-facing. The helical transmembrane segment at 236–256 (FSTCSSHMIVISLSYGSCMFM) threads the bilayer. Topologically, residues 257–269 (YINPSAKEGGAFN) are extracellular. Residues 270 to 290 (KGIAVLITSVTPLLNPFIYTL) form a helical membrane-spanning segment. The Cytoplasmic portion of the chain corresponds to 291-309 (RNQQVKQAFKDSVKKIVKL).

This sequence belongs to the G-protein coupled receptor 1 family.

It localises to the cell membrane. In terms of biological role, odorant receptor. This chain is Olfactory receptor 6C4 (OR6C4), found in Homo sapiens (Human).